Here is a 438-residue protein sequence, read N- to C-terminus: Enolase (438 aa).

Q164 contributes to the (2R)-2-phosphoglycerate binding site. E206 (proton donor) is an active-site residue. 3 residues coordinate Mg(2+): D243, E289, and D316. (2R)-2-phosphoglycerate-binding residues include K341, R370, S371, and K392. Catalysis depends on K341, which acts as the Proton acceptor.

The protein belongs to the enolase family. Requires Mg(2+) as cofactor.

Its subcellular location is the cytoplasm. The protein resides in the secreted. It localises to the cell surface. It catalyses the reaction (2R)-2-phosphoglycerate = phosphoenolpyruvate + H2O. It functions in the pathway carbohydrate degradation; glycolysis; pyruvate from D-glyceraldehyde 3-phosphate: step 4/5. Functionally, catalyzes the reversible conversion of 2-phosphoglycerate (2-PG) into phosphoenolpyruvate (PEP). It is essential for the degradation of carbohydrates via glycolysis. This Borrelia garinii subsp. bavariensis (strain ATCC BAA-2496 / DSM 23469 / PBi) (Borreliella bavariensis) protein is Enolase.